Here is a 518-residue protein sequence, read N- to C-terminus: MTLAEFWPLCLRRLHDMLPQGQFAQWIAPLTVGEEGGVWVVYGKNQFACNMLKSQFAGKIEAVREELAAGRSAFVFKPGEGVRYEMAAVEGAVEPAEPSLHAGSEEMPVQEVLLDELPSEEPVKPAASKTAADILAERMKNLPHEPRHTAEPASRPESEVLAKARTDAQRDAEEARYEQTNLSPDYTFDTLVEGKGNRLAAAAAQAIAESPGQSYNPFFLYGSTGLGKTHLVQAVGNELLKNRPDAKVRYMHSDDYIRSFMKAVRNNTYDVFKQQYKQYDLLIIDDIQFIKGKDRTMEEFFYLYNHFHNEKKQLILTCDVLPAKIEGMDDRLKSRFSWGLTLELEPPELEMRIAILQKKAEAAGISIEDEAALFIANLIRSNVRELEGAFNRVGASSRFMNRPVIDIDLARTALQDIIAEKHKVITADIIIDAVAKYYRIKISDVLGKKRTRNIARPRQVAMSLTKELTTLSLPSIGDSFGGRDHTTVMHGIRAVAKLREEDPELAQDYEKLLILIQN.

The domain I, interacts with DnaA modulators stretch occupies residues M1–S72. The interval S72–T180 is domain II. The segment at N181–S397 is domain III, AAA+ region. ATP contacts are provided by G225, G227, K228, and T229. The domain IV, binds dsDNA stretch occupies residues R398–N518.

Belongs to the DnaA family. As to quaternary structure, oligomerizes as a right-handed, spiral filament on DNA at oriC.

It localises to the cytoplasm. Its function is as follows. Plays an essential role in the initiation and regulation of chromosomal replication. ATP-DnaA binds to the origin of replication (oriC) to initiate formation of the DNA replication initiation complex once per cell cycle. Binds the DnaA box (a 9 base pair repeat at the origin) and separates the double-stranded (ds)DNA. Forms a right-handed helical filament on oriC DNA; dsDNA binds to the exterior of the filament while single-stranded (ss)DNA is stabiized in the filament's interior. The ATP-DnaA-oriC complex binds and stabilizes one strand of the AT-rich DNA unwinding element (DUE), permitting loading of DNA polymerase. After initiation quickly degrades to an ADP-DnaA complex that is not apt for DNA replication. Binds acidic phospholipids. The protein is Chromosomal replication initiator protein DnaA of Neisseria meningitidis serogroup C / serotype 2a (strain ATCC 700532 / DSM 15464 / FAM18).